The sequence spans 313 residues: Putative S-adenosyl-L-methionine-dependent methyltransferase MUL_0706 (313 aa).

S-adenosyl-L-methionine is bound by residues aspartate 132 and 161 to 162; that span reads DL.

The protein belongs to the UPF0677 family.

Exhibits S-adenosyl-L-methionine-dependent methyltransferase activity. The protein is Putative S-adenosyl-L-methionine-dependent methyltransferase MUL_0706 of Mycobacterium ulcerans (strain Agy99).